The primary structure comprises 59 residues: Large ribosomal subunit protein uL30 (59 aa).

This sequence belongs to the universal ribosomal protein uL30 family. Part of the 50S ribosomal subunit.

This chain is Large ribosomal subunit protein uL30, found in Rhodococcus jostii (strain RHA1).